The sequence spans 574 residues: Putative dehydratase IlvD1 (574 aa).

Cys-124 and Cys-197 together coordinate [4Fe-4S] cluster.

The protein belongs to the IlvD/Edd family. [4Fe-4S] cluster serves as cofactor.

Its function is as follows. Involved in the degradation of galactose via the DeLey-Doudoroff pathway. In Rhizobium meliloti (strain 1021) (Ensifer meliloti), this protein is Putative dehydratase IlvD1 (ilvD1).